A 217-amino-acid chain; its full sequence is Small ribosomal subunit protein uS3 (217 aa).

The 71-residue stretch at 40–110 (IRDLINKWFN…EVYINIHEVR (71 aa)) folds into the KH type-2 domain.

This sequence belongs to the universal ribosomal protein uS3 family. Part of the 30S ribosomal subunit. Forms a tight complex with proteins S10 and S14.

Functionally, binds the lower part of the 30S subunit head. Binds mRNA in the 70S ribosome, positioning it for translation. The protein is Small ribosomal subunit protein uS3 of Rickettsia typhi (strain ATCC VR-144 / Wilmington).